Reading from the N-terminus, the 397-residue chain is Phosphoglycerate kinase (397 aa).

Residues 25 to 27, Arg-41, 64 to 67, Arg-118, and Arg-151 each bind substrate; these read DLN and HLGR. Residues Lys-202, Glu-324, and 350–353 contribute to the ATP site; that span reads GGDT.

Belongs to the phosphoglycerate kinase family. As to quaternary structure, monomer.

It is found in the cytoplasm. The enzyme catalyses (2R)-3-phosphoglycerate + ATP = (2R)-3-phospho-glyceroyl phosphate + ADP. Its pathway is carbohydrate degradation; glycolysis; pyruvate from D-glyceraldehyde 3-phosphate: step 2/5. The protein is Phosphoglycerate kinase of Acidovorax ebreus (strain TPSY) (Diaphorobacter sp. (strain TPSY)).